Reading from the N-terminus, the 402-residue chain is Putative F-box/kelch-repeat protein At1g61540 (402 aa).

One can recognise an F-box domain in the interval 24 to 70; it reads PISIMSLPYDLLLNCFSLVSRLYYPTLSLVSKTFRSIITSRELYEIR. Kelch repeat units follow at residues 135 to 189, 191 to 240, and 246 to 293; these read NIYK…CEVD, KIYI…EVKS, and KIYM…VVDN.

This Arabidopsis thaliana (Mouse-ear cress) protein is Putative F-box/kelch-repeat protein At1g61540.